Consider the following 230-residue polypeptide: uncharacterized protein (230 aa).

A helical transmembrane segment spans residues 93 to 115; the sequence is VFLYYFLIVYTSGNVDLISRFLF.

The protein belongs to the DUP/COS family.

It is found in the membrane. This is an uncharacterized protein from Saccharomyces cerevisiae (strain ATCC 204508 / S288c) (Baker's yeast).